The sequence spans 397 residues: Acetyl-CoA acetyltransferase (397 aa).

Cys95 functions as the Acyl-thioester intermediate in the catalytic mechanism. Positions 187 and 230 each coordinate CoA. Tyr187 contributes to the K(+) binding site. Ala246, Gly247, and Ala249 together coordinate K(+). Residue Ser250 participates in CoA binding. A K(+)-binding site is contributed by Val347. Catalysis depends on proton acceptor residues His351 and Cys379.

Belongs to the thiolase-like superfamily. Thiolase family.

The protein resides in the peroxisome. The enzyme catalyses 2 acetyl-CoA = acetoacetyl-CoA + CoA. Functionally, essential for n-decane utilization. In Yarrowia lipolytica (strain CLIB 122 / E 150) (Yeast), this protein is Acetyl-CoA acetyltransferase (PAT1).